The primary structure comprises 278 residues: Indole-3-glycerol phosphate synthase (278 aa).

This sequence belongs to the TrpC family.

The catalysed reaction is 1-(2-carboxyphenylamino)-1-deoxy-D-ribulose 5-phosphate + H(+) = (1S,2R)-1-C-(indol-3-yl)glycerol 3-phosphate + CO2 + H2O. It participates in amino-acid biosynthesis; L-tryptophan biosynthesis; L-tryptophan from chorismate: step 4/5. The sequence is that of Indole-3-glycerol phosphate synthase from Pseudomonas fluorescens (strain ATCC BAA-477 / NRRL B-23932 / Pf-5).